The sequence spans 452 residues: Ribosomal protein uS12 methylthiotransferase RimO (452 aa).

The MTTase N-terminal domain occupies 3-118 (GKIGFVSLGC…VMQAIHLHLP (116 aa)). 6 residues coordinate [4Fe-4S] cluster: cysteine 12, cysteine 48, cysteine 77, cysteine 149, cysteine 153, and cysteine 156. One can recognise a Radical SAM core domain in the interval 135–381 (LTPKHYAYLK…MAKAEDISIK (247 aa)). Residues 384-452 (AKKIGKRVQV…SQGHDLIAET (69 aa)) form the TRAM domain.

Belongs to the methylthiotransferase family. RimO subfamily. It depends on [4Fe-4S] cluster as a cofactor.

The protein resides in the cytoplasm. The enzyme catalyses L-aspartate(89)-[ribosomal protein uS12]-hydrogen + (sulfur carrier)-SH + AH2 + 2 S-adenosyl-L-methionine = 3-methylsulfanyl-L-aspartate(89)-[ribosomal protein uS12]-hydrogen + (sulfur carrier)-H + 5'-deoxyadenosine + L-methionine + A + S-adenosyl-L-homocysteine + 2 H(+). Catalyzes the methylthiolation of an aspartic acid residue of ribosomal protein uS12. In Polynucleobacter asymbioticus (strain DSM 18221 / CIP 109841 / QLW-P1DMWA-1) (Polynucleobacter necessarius subsp. asymbioticus), this protein is Ribosomal protein uS12 methylthiotransferase RimO.